Reading from the N-terminus, the 610-residue chain is Glutamine--fructose-6-phosphate aminotransferase [isomerizing] (610 aa).

The Nucleophile; for GATase activity role is filled by Cys-2. Residues 2–217 (CGIVGYVGQK…DKEFVVLTND (216 aa)) form the Glutamine amidotransferase type-2 domain. SIS domains are found at residues 284–424 (ITKE…LKGS) and 453–600 (LIKE…VDKP). Lys-605 (for Fru-6P isomerization activity) is an active-site residue.

In terms of assembly, homodimer.

The protein localises to the cytoplasm. The enzyme catalyses D-fructose 6-phosphate + L-glutamine = D-glucosamine 6-phosphate + L-glutamate. Functionally, catalyzes the first step in hexosamine metabolism, converting fructose-6P into glucosamine-6P using glutamine as a nitrogen source. The chain is Glutamine--fructose-6-phosphate aminotransferase [isomerizing] from Clostridium perfringens (strain 13 / Type A).